We begin with the raw amino-acid sequence, 577 residues long: Proline--tRNA ligase (577 aa).

It belongs to the class-II aminoacyl-tRNA synthetase family. ProS type 1 subfamily. As to quaternary structure, homodimer.

It is found in the cytoplasm. It catalyses the reaction tRNA(Pro) + L-proline + ATP = L-prolyl-tRNA(Pro) + AMP + diphosphate. Catalyzes the attachment of proline to tRNA(Pro) in a two-step reaction: proline is first activated by ATP to form Pro-AMP and then transferred to the acceptor end of tRNA(Pro). As ProRS can inadvertently accommodate and process non-cognate amino acids such as alanine and cysteine, to avoid such errors it has two additional distinct editing activities against alanine. One activity is designated as 'pretransfer' editing and involves the tRNA(Pro)-independent hydrolysis of activated Ala-AMP. The other activity is designated 'posttransfer' editing and involves deacylation of mischarged Ala-tRNA(Pro). The misacylated Cys-tRNA(Pro) is not edited by ProRS. This chain is Proline--tRNA ligase, found in Chlamydia abortus (strain DSM 27085 / S26/3) (Chlamydophila abortus).